The chain runs to 511 residues: Fas-activated serine/threonine kinase (511 aa).

The region spanning 439–497 (VVLMLRERWHFCRDGRVLLGSRALRERHLGLMGYQLLPLPFEELESQRGLPQLKSYLRQ) is the RAP domain.

The protein belongs to the FAST protein kinase family. In terms of assembly, interacts with TIA1; the interactions leads to TIA1 phosphorylation. Interacts with TIAR. Post-translationally, autophosphorylated on serine/threonine residues. Activated by dephosphorylation.

The protein localises to the mitochondrion matrix. It carries out the reaction L-seryl-[Fas-activated protein] + ATP = O-phospho-L-seryl-[Fas-activated protein] + ADP + H(+). The enzyme catalyses L-threonyl-[Fas-activated protein] + ATP = O-phospho-L-threonyl-[Fas-activated protein] + ADP + H(+). The catalysed reaction is L-seryl-[protein] + ATP = O-phospho-L-seryl-[protein] + ADP + H(+). It catalyses the reaction L-threonyl-[protein] + ATP = O-phospho-L-threonyl-[protein] + ADP + H(+). Phosphorylates the splicing regulator TIA1, thereby promoting the inclusion of FAS exon 6, which leads to an mRNA encoding a pro-apoptotic form of the receptor. Required for the biogenesis of some mitochondrial-encoded mRNAs, specifically stabilizes ND6 (NADH dehydrogenase complex subunit 6) mRNA, and regulates its levels. This is Fas-activated serine/threonine kinase (Fastk) from Mus musculus (Mouse).